The chain runs to 361 residues: Elongator complex protein 4 (361 aa).

2 disordered regions span residues 93 to 124 and 338 to 361; these read QLPG…PQQE and DDEQ…SLDF. Composition is skewed to polar residues over residues 104 to 121 and 346 to 355; these read NENS…SKNP and ISNTNPQKQP.

Belongs to the ELP4 family. As to quaternary structure, component of the elongator complex.

The protein resides in the cytoplasm. It localises to the nucleus. It participates in tRNA modification; 5-methoxycarbonylmethyl-2-thiouridine-tRNA biosynthesis. In terms of biological role, component of the elongator complex, a multiprotein complex which is required for multiple tRNA modifications, including mcm5U (5-methoxycarbonylmethyl uridine), mcm5s2U (5-methoxycarbonylmethyl-2-thiouridine), and ncm5U (5-carbamoylmethyl uridine). The elongator complex catalyzes formation of carboxymethyluridine in the wobble base at position 34 in tRNAs. The chain is Elongator complex protein 4 from Schizosaccharomyces pombe (strain 972 / ATCC 24843) (Fission yeast).